A 199-amino-acid polypeptide reads, in one-letter code: Tumor necrosis factor ligand superfamily member 4 (199 aa).

Over 1–25 the chain is Cytoplasmic; sequence MEGEGVQPPDENLENGSRPRFKWKK. Residues 26-48 traverse the membrane as a helical; Signal-anchor for type II membrane protein segment; sequence VLRLVVSGIKAAGLLLCVVYVCL. Residues 49 to 199 are Extracellular-facing; sequence QFSSSPAKDS…YSSTVNQVPL (151 aa). One can recognise a THD domain in the interval 59–176; the sequence is PIQRLRAPVT…QINDGELIIV (118 aa). 2 disulfide bridges follow: cysteine 70–cysteine 163 and cysteine 98–cysteine 184. 2 N-linked (GlcNAc...) asparagine glycosylation sites follow: asparagine 91 and asparagine 157.

The protein belongs to the tumor necrosis factor family. Homotrimer. Detected in T-cell lines, but not in a macrophage cell line.

The protein resides in the membrane. Cytokine that binds to TNFRSF4. Co-stimulates T-cell proliferation and cytokine production. This is Tumor necrosis factor ligand superfamily member 4 (Tnfsf4) from Rattus norvegicus (Rat).